A 784-amino-acid chain; its full sequence is LPS-assembly protein LptD (784 aa).

The first 24 residues, 1 to 24, serve as a signal peptide directing secretion; sequence MKKRIPTLLATMIATALYSQQGLA. Cystine bridges form between Cys31–Cys724 and Cys173–Cys725.

It belongs to the LptD family. In terms of assembly, component of the lipopolysaccharide transport and assembly complex. Interacts with LptE and LptA. In terms of processing, contains two intramolecular disulfide bonds.

It is found in the cell outer membrane. Its function is as follows. Together with LptE, is involved in the assembly of lipopolysaccharide (LPS) at the surface of the outer membrane. This is LPS-assembly protein LptD from Shigella flexneri serotype 5b (strain 8401).